Here is a 722-residue protein sequence, read N- to C-terminus: Transmembrane channel-like protein 8 (722 aa).

Positions 1–21 (MFRQWSVQSGPAPRRPESQAA) are disordered. Residues 1–118 (MFRQWSVQSG…GIQSYFTFLR (118 aa)) are Cytoplasmic-facing. Serine 6 and serine 18 each carry phosphoserine. A helical membrane pass occupies residues 119-139 (FLLLLNLLTMLLTACFVLLPL). Residues 140 to 204 (VWLRPPELGP…AGPESSSEYS (65 aa)) lie on the Lumenal side of the membrane. The N-linked (GlcNAc...) asparagine glycan is linked to asparagine 184. The chain crosses the membrane as a helical span at residues 205 to 225 (IRLAYLLSPMVCLLLCFCGIL). The Cytoplasmic portion of the chain corresponds to 226-307 (QRMAEGLPQQ…CRLLTYLRTN (82 aa)). Residues 308-328 (ILIVLLVVGAISAIFWATKYS) form a helical membrane-spanning segment. Residues 329-375 (QDNKEESLFLVLQYLPPGVISLVNFLGPQLFTVLIQLENYPPGTEVN) are Lumenal-facing. The TMC domain stretch occupies residues 366–534 (ENYPPGTEVN…SPRRFRASSS (169 aa)). Asparagine 375 is a glycosylation site (N-linked (GlcNAc...) asparagine). Residues 376–396 (LTLIWCVVLKLASLGMFSFSL) form a helical membrane-spanning segment. Topologically, residues 397–430 (GQTVLCIGRNKTSCESYGYNACDYQCWENSVGEE) are cytoplasmic. The helical transmembrane segment at 431-451 (LYKLIIFNFLLTVAFAFLVSL) threads the bilayer. At 452 to 492 (PRRLLVERFSGWFWTWLDREEFLVPKNVLDIVAAQTVTWMG) the chain is on the lumenal side. A helical transmembrane segment spans residues 493-513 (LFYCPLLPLLNSVFLFLTFYI). The Cytoplasmic segment spans residues 514–536 (KKYTLLRNSRASPRRFRASSSTF). A helical membrane pass occupies residues 537 to 557 (FFHLVLLLGLLLAAVPLAYVI). Over 558 to 598 (SSTHSSWDCGLFTNYSAPWQVVPELVALQLPLPSQRALRYL) the chain is Lumenal. Asparagine 571 is a glycosylation site (N-linked (GlcNAc...) asparagine). Residues 599–619 (SSHAFSFPLLILLSIVLTVCI) form a helical membrane-spanning segment. The Cytoplasmic segment spans residues 620-722 (SQSRANARAI…RFHFPSRTEL (103 aa)). Serine 658, serine 663, and serine 673 each carry phosphoserine. Positions 658–722 (SPEPGSPHSR…RFHFPSRTEL (65 aa)) are disordered. Residues 678–687 (FPCPGSPGPR) are compositionally biased toward pro residues. The span at 689 to 712 (PRLAPSNRLSSSSLGAPSASVPAS) shows a compositional bias: low complexity. Residue serine 698 is modified to Phosphoserine.

The protein belongs to the TMC family. As to quaternary structure, interacts with TMC6. Interacts and forms a complex with TMC6 and CIB1; the interaction stabilizes each component of the complex. Interacts and forms a complex with TMC6 and SLC30A1/ZNT1; the interaction regulates zinc transport into the ER. Interacts with TRADD; the interaction competes with TRADD/RIPK1/TRAF2/cIAPs complex I formation and facilites complex II formation. As to expression, expressed in thymus, lung, prostate, placenta, testis and spleen. Expressed in lymphocytes and peripheral lymphocytes.

It is found in the endoplasmic reticulum membrane. The protein localises to the golgi apparatus membrane. It localises to the nucleus membrane. Its function is as follows. Acts as a regulatory protein involved in the regulation of numerous cellular processes. Together with its homolog TMC6/EVER1, forms a complex with calcium-binding protein CIB1 in lymphocytes and keratynocytes where TMC6 and TMC8 stabilize CIB1 levels and reciprocally. Together with TMC6, also forms a complex with and activates zinc transporter ZNT1 at the ER membrane of keratynocytes, thereby facilitating zinc uptake into the ER. Also inhibits receptor-mediated calcium release from ER stores and calcium activated and volume regulated chloride channels. Down-regulates the activity of transcription factors induced by zinc and cytokines. Also sequesters TRADD which impairs the recruitment of TRAF2 and RIPK1 in the pro-survival complex I and promotes proapoptotic complex II formation, and may therefore be involved in TNF-induced cell death/survival decisions. The sequence is that of Transmembrane channel-like protein 8 from Mus musculus (Mouse).